The following is a 47-amino-acid chain: Putative protein PinH (47 aa).

A Resolvase/invertase-type recombinase catalytic domain is found at 1–47; the sequence is MWHLVVLLEELCERGINFRALAQSIFAQQWGDECCKSKTICDLKVIV.

This sequence belongs to the site-specific recombinase resolvase family.

The sequence is that of Putative protein PinH (pinH) from Escherichia coli (strain K12).